A 494-amino-acid chain; its full sequence is Inosine-5'-monophosphate dehydrogenase (494 aa).

CBS domains follow at residues 93 to 154 (IIRN…NEKI) and 158 to 217 (MTTD…CKDM). NAD(+) contacts are provided by residues Asp251 and 301–303 (GIG). K(+) contacts are provided by Gly303 and Gly305. Position 306 (Ser306) interacts with IMP. K(+) is bound at residue Cys308. Cys308 acts as the Thioimidate intermediate in catalysis. IMP-binding positions include 341–343 (DGG), 364–365 (GS), and 388–392 (YRGMG). Catalysis depends on Arg406, which acts as the Proton acceptor. An IMP-binding site is contributed by Glu421. Residues Glu475, Ser476, and His477 each coordinate K(+).

Belongs to the IMPDH/GMPR family. Homotetramer. It depends on K(+) as a cofactor.

It carries out the reaction IMP + NAD(+) + H2O = XMP + NADH + H(+). Its pathway is purine metabolism; XMP biosynthesis via de novo pathway; XMP from IMP: step 1/1. With respect to regulation, mycophenolic acid (MPA) is a non-competitive inhibitor that prevents formation of the closed enzyme conformation by binding to the same site as the amobile flap. In contrast, mizoribine monophosphate (MZP) is a competitive inhibitor that induces the closed conformation. MPA is a potent inhibitor of mammalian IMPDHs but a poor inhibitor of the bacterial enzymes. MZP is a more potent inhibitor of bacterial IMPDH. Its function is as follows. Catalyzes the conversion of inosine 5'-phosphate (IMP) to xanthosine 5'-phosphate (XMP), the first committed and rate-limiting step in the de novo synthesis of guanine nucleotides, and therefore plays an important role in the regulation of cell growth. In Chlorobaculum parvum (strain DSM 263 / NCIMB 8327) (Chlorobium vibrioforme subsp. thiosulfatophilum), this protein is Inosine-5'-monophosphate dehydrogenase.